The primary structure comprises 445 residues: MTNKLRSEETITSLSSFMASTLSIASPSPCSIPLSVTKVSPLKRKRPTHLNIPDLNPQQPISTDYFRFREGDAKVSPLKRKRPAHLNIPDLNPQQPIRTDYFSFTDFAHQNGTVSFGGNGFGVVSRNGKKKFMEDTHRIVPCLVGNSKKSFFGVYDGHGGAKAAEFVAENLHKYVVEMMENCKGKEEKVEAFKAAFLRTDRDFLEKGVVSGACCVTAVIQDQEMIVSNLGDCRAVLCRAGVAEALTDDHKPGRDDEKERIESQGGYVDNHQGAWRVQGILAVSRSIGDAHLKKWVVAEPETRVLELEQDMEFLVLASDGLWDVVSNQEAVYTVLHVLAQRKTPKESEEENLVQGFVNMSPSSKLRRASLVKSPRCAKSQSYYYNSENESPSLNREIGSSPSKSPITPWKSLWAKAACKELANLAAKRGSMDDITVVIIDLNHYKG.

The 321-residue stretch at 120–440 (GFGVVSRNGK…DDITVVIIDL (321 aa)) folds into the PPM-type phosphatase domain. 3 residues coordinate Mn(2+): D156, G157, and D318. The interval 384–404 (NSENESPSLNREIGSSPSKSP) is disordered. A compositionally biased stretch (polar residues) spans 390–404 (PSLNREIGSSPSKSP). Residue D431 participates in Mn(2+) binding.

The protein belongs to the PP2C family. Mg(2+) serves as cofactor. The cofactor is Mn(2+).

It carries out the reaction O-phospho-L-seryl-[protein] + H2O = L-seryl-[protein] + phosphate. It catalyses the reaction O-phospho-L-threonyl-[protein] + H2O = L-threonyl-[protein] + phosphate. This Arabidopsis thaliana (Mouse-ear cress) protein is Probable protein phosphatase 2C 14.